The chain runs to 78 residues: Acyl carrier protein (78 aa).

Residues 2–77 (SDIAERVKKI…DAIKFLEKNA (76 aa)) enclose the Carrier domain. The residue at position 37 (serine 37) is an O-(pantetheine 4'-phosphoryl)serine.

Belongs to the acyl carrier protein (ACP) family. In terms of processing, 4'-phosphopantetheine is transferred from CoA to a specific serine of apo-ACP by AcpS. This modification is essential for activity because fatty acids are bound in thioester linkage to the sulfhydryl of the prosthetic group.

The protein resides in the cytoplasm. Its pathway is lipid metabolism; fatty acid biosynthesis. Functionally, carrier of the growing fatty acid chain in fatty acid biosynthesis. The sequence is that of Acyl carrier protein from Xanthobacter autotrophicus (strain ATCC BAA-1158 / Py2).